The primary structure comprises 85 residues: Toxin BmKITc (85 aa).

Residues 1–21 form the signal peptide; it reads MKLFLLLVIFASMLNDGLVNA. The 61-residue stretch at 22–82 folds into the LCN-type CS-alpha/beta domain; sequence DGYIRGSDGC…KWKYESNTCG (61 aa). Intrachain disulfides connect cysteine 31-cysteine 81, cysteine 35-cysteine 56, cysteine 42-cysteine 63, and cysteine 46-cysteine 65.

This sequence belongs to the long (4 C-C) scorpion toxin superfamily. Sodium channel inhibitor family. Beta subfamily. In terms of tissue distribution, expressed by the venom gland.

The protein localises to the secreted. Depressant insect beta-toxins cause a transient contraction paralysis followed by a slow flaccid paralysis. They bind voltage-independently at site-4 of sodium channels (Nav) and shift the voltage of activation toward more negative potentials thereby affecting sodium channel activation and promoting spontaneous and repetitive firing. The protein is Toxin BmKITc of Olivierus martensii (Manchurian scorpion).